The primary structure comprises 531 residues: Phosphoinositide phospholipase C 9 (531 aa).

The PI-PLC X-box domain occupies 107-253 (RDMNAPLSHY…LQNKILISRR (147 aa)). In terms of domain architecture, PI-PLC Y-box spans 265-385 (ENGVELEIQE…GYVKKPNFLL (121 aa)). At S276 the chain carries Phosphoserine. A C2 domain is found at 386-513 (NAGSSGVFYP…EGIRAVPLYD (128 aa)).

Ca(2+) is required as a cofactor. Expressed in leaves, roots, flowers and siliques.

Its subcellular location is the cell membrane. It catalyses the reaction a 1,2-diacyl-sn-glycero-3-phospho-(1D-myo-inositol-4,5-bisphosphate) + H2O = 1D-myo-inositol 1,4,5-trisphosphate + a 1,2-diacyl-sn-glycerol + H(+). The production of the second messenger molecules diacylglycerol (DAG) and inositol 1,4,5-trisphosphate (IP3) is mediated by activated phosphatidylinositol-specific phospholipase C enzymes. The sequence is that of Phosphoinositide phospholipase C 9 (PLC9) from Arabidopsis thaliana (Mouse-ear cress).